The sequence spans 913 residues: Ubiquitin carboxyl-terminal hydrolase 20 (913 aa).

A UBP-type zinc finger spans residues 6-111; sequence DLCPHLDSIG…GSSKFSEQDS (106 aa). Zn(2+)-binding residues include Cys8, His10, Cys30, Cys33, Cys43, Cys48, Cys53, His60, His64, His70, Cys83, and Cys86. Phosphoserine is present on residues Ser111, Ser131, and Ser133. Residues 144 to 684 form the USP domain; it reads TGMKNLGNSC…EGYVLFYRKS (541 aa). The active-site Nucleophile is the Cys153. The tract at residues 256 to 414 is disordered; it reads LTEARDSDSS…SSSPPRASPV (159 aa). Thr257 is subject to Phosphothreonine. Over residues 258-278 the composition is skewed to basic and acidic residues; sequence EARDSDSSDTDEKREGDRSPS. The residue at position 304 (Ser304) is a Phosphoserine. Basic and acidic residues predominate over residues 315 to 331; that stretch reads EASRAISEKERMKDRKF. At Ser367 the chain carries Phosphoserine. At Thr376 the chain carries Phosphothreonine. Phosphoserine occurs at positions 407 and 412. The active-site Proton acceptor is the His642. DUSP domains follow at residues 686 to 779 and 788 to 891; these read EEAV…LYVC and ALAK…RQSV.

This sequence belongs to the peptidase C19 family. USP20/USP33 subfamily. As to quaternary structure, interacts with VHL, leading to its ubiquitination and subsequent degradation. Interacts with CCP110. Interacts with DIO2. Interacts with HIF1A. Interacts with ADRB2. Interacts with USP18. Post-translationally, ubiquitinated via a VHL-dependent pathway for proteasomal degradation.

The protein resides in the cytoplasm. Its subcellular location is the endoplasmic reticulum. It is found in the perinuclear region. The protein localises to the cytoskeleton. It localises to the microtubule organizing center. The protein resides in the centrosome. It carries out the reaction Thiol-dependent hydrolysis of ester, thioester, amide, peptide and isopeptide bonds formed by the C-terminal Gly of ubiquitin (a 76-residue protein attached to proteins as an intracellular targeting signal).. Deubiquitinating enzyme that plays a role in many cellular processes including autophagy, cellular antiviral response or membrane protein biogenesis. Attenuates TLR4-mediated NF-kappa-B signaling by cooperating with beta-arrestin-2/ARRB2 and inhibiting TRAF6 autoubiquitination. Promotes cellular antiviral responses by deconjugating 'Lys-33' and 'Lys-48'-linked ubiquitination of STING1 leading to its stabilization. Plays an essential role in autophagy induction by regulating the ULK1 stability through deubiquitination of ULK1. Acts as a positive regulator for NF-kappa-B activation by TNF-alpha through deubiquitinating 'Lys-48'-linked polyubiquitination of SQSTM1, leading to its increased stability. Acts as a regulator of G-protein coupled receptor (GPCR) signaling by mediating the deubiquitination beta-2 adrenergic receptor (ADRB2). Plays a central role in ADRB2 recycling and resensitization after prolonged agonist stimulation by constitutively binding ADRB2, mediating deubiquitination of ADRB2 and inhibiting lysosomal trafficking of ADRB2. Upon dissociation, it is probably transferred to the translocated beta-arrestins, possibly leading to beta-arrestins deubiquitination and disengagement from ADRB2. This suggests the existence of a dynamic exchange between the ADRB2 and beta-arrestins. Deubiquitinates DIO2, thereby regulating thyroid hormone regulation. Deubiquitinates HIF1A, leading to stabilize HIF1A and enhance HIF1A-mediated activity. Deubiquitinates MCL1, a pivotal member of the anti-apoptotic Bcl-2 protein family to regulate its stability. Within the endoplasmic reticulum, participates with USP33 in the rescue of post-translationally targeted membrane proteins that are inappropriately ubiquitinated by the cytosolic protein quality control in the cytosol. In Pongo abelii (Sumatran orangutan), this protein is Ubiquitin carboxyl-terminal hydrolase 20 (USP20).